Reading from the N-terminus, the 226-residue chain is ATP synthase F(0) complex subunit a (226 aa).

The next 6 helical transmembrane spans lie at 6–26 (FASF…IVLF), 68–88 (WTLM…LGLL), 97–117 (QLSM…ITGF), 138–158 (IPML…ALAV), 164–184 (ITAG…LMSI), and 200–222 (TILE…SLYL).

Belongs to the ATPase A chain family. In terms of assembly, component of the ATP synthase complex composed at least of ATP5F1A/subunit alpha, ATP5F1B/subunit beta, ATP5MC1/subunit c (homooctomer), MT-ATP6/subunit a, MT-ATP8/subunit 8, ATP5ME/subunit e, ATP5MF/subunit f, ATP5MG/subunit g, ATP5MK/subunit k, ATP5MJ/subunit j, ATP5F1C/subunit gamma, ATP5F1D/subunit delta, ATP5F1E/subunit epsilon, ATP5PF/subunit F6, ATP5PB/subunit b, ATP5PD/subunit d, ATP5PO/subunit OSCP. ATP synthase complex consists of a soluble F(1) head domain (subunits alpha(3) and beta(3)) - the catalytic core - and a membrane F(0) domain - the membrane proton channel (subunits c, a, 8, e, f, g, k and j). These two domains are linked by a central stalk (subunits gamma, delta, and epsilon) rotating inside the F1 region and a stationary peripheral stalk (subunits F6, b, d, and OSCP). Interacts with DNAJC30; interaction is direct.

The protein localises to the mitochondrion inner membrane. The catalysed reaction is H(+)(in) = H(+)(out). Functionally, subunit a, of the mitochondrial membrane ATP synthase complex (F(1)F(0) ATP synthase or Complex V) that produces ATP from ADP in the presence of a proton gradient across the membrane which is generated by electron transport complexes of the respiratory chain. ATP synthase complex consist of a soluble F(1) head domain - the catalytic core - and a membrane F(1) domain - the membrane proton channel. These two domains are linked by a central stalk rotating inside the F(1) region and a stationary peripheral stalk. During catalysis, ATP synthesis in the catalytic domain of F(1) is coupled via a rotary mechanism of the central stalk subunits to proton translocation. With the subunit c (ATP5MC1), forms the proton-conducting channel in the F(0) domain, that contains two crucial half-channels (inlet and outlet) that facilitate proton movement from the mitochondrial intermembrane space (IMS) into the matrix. Protons are taken up via the inlet half-channel and released through the outlet half-channel, following a Grotthuss mechanism. The sequence is that of ATP synthase F(0) complex subunit a from Bos mutus grunniens (Wild yak).